The primary structure comprises 150 residues: Cyclin-dependent kinases regulatory subunit (150 aa).

The span at Ala-115 to Gln-137 shows a compositional bias: low complexity. A disordered region spans residues Ala-115–Ser-150.

This sequence belongs to the CKS family. In terms of assembly, forms a stable but non-covalent complex with the CDC28 protein and with a cyclin.

Its function is as follows. Binds to the catalytic subunit of the cyclin dependent kinase (CDC28) and is essential for its biological function. In Saccharomyces cerevisiae (strain ATCC 204508 / S288c) (Baker's yeast), this protein is Cyclin-dependent kinases regulatory subunit.